The chain runs to 410 residues: Iron-sulfur cluster assembly SufBD family protein MTH_1150 (410 aa).

The protein belongs to the iron-sulfur cluster assembly SufBD family.

The sequence is that of Iron-sulfur cluster assembly SufBD family protein MTH_1150 from Methanothermobacter thermautotrophicus (strain ATCC 29096 / DSM 1053 / JCM 10044 / NBRC 100330 / Delta H) (Methanobacterium thermoautotrophicum).